Reading from the N-terminus, the 453-residue chain is Tubulin alpha-1/2/3 chain (453 aa).

A GTP-binding site is contributed by Gln-11. Position 40 is an N6-acetyllysine (Lys-40). GTP-binding residues include Glu-71, Ser-140, Gly-144, Thr-145, Thr-179, Asn-206, and Asn-228. Residue Glu-71 coordinates Mg(2+). Glu-254 is an active-site residue. The disordered stretch occupies residues 429–453 (EKDYEEVGTESQEGDGEEGEDGGDQ). The segment covering 431 to 453 (DYEEVGTESQEGDGEEGEDGGDQ) has biased composition (acidic residues).

It belongs to the tubulin family. In terms of assembly, dimer of alpha and beta chains. A typical microtubule is a hollow water-filled tube with an outer diameter of 25 nm and an inner diameter of 15 nM. Alpha-beta heterodimers associate head-to-tail to form protofilaments running lengthwise along the microtubule wall with the beta-tubulin subunit facing the microtubule plus end conferring a structural polarity. Microtubules usually have 13 protofilaments but different protofilament numbers can be found in some organisms and specialized cells. Requires Mg(2+) as cofactor. Post-translationally, acetylation of alpha chains at Lys-40 stabilizes microtubules and affects affinity and processivity of microtubule motors. This modification has a role in multiple cellular functions, ranging from cell motility, cell cycle progression or cell differentiation to intracellular trafficking and signaling.

The protein resides in the cytoplasm. The protein localises to the cytoskeleton. It carries out the reaction GTP + H2O = GDP + phosphate + H(+). Its function is as follows. Tubulin is the major constituent of microtubules, a cylinder consisting of laterally associated linear protofilaments composed of alpha- and beta-tubulin heterodimers. Microtubules grow by the addition of GTP-tubulin dimers to the microtubule end, where a stabilizing cap forms. Below the cap, tubulin dimers are in GDP-bound state, owing to GTPase activity of alpha-tubulin. The chain is Tubulin alpha-1/2/3 chain (TBA1) from Naegleria gruberi (Amoeba).